A 179-amino-acid chain; its full sequence is Orotate phosphoribosyltransferase (179 aa).

5-phospho-alpha-D-ribose 1-diphosphate is bound by residues arginine 94, lysine 95, lysine 98, histidine 100, and 120-128; that span reads EDTSTTGNS. Orotate-binding residues include threonine 124 and arginine 152.

Belongs to the purine/pyrimidine phosphoribosyltransferase family. PyrE subfamily. Homodimer. The cofactor is Mg(2+).

It catalyses the reaction orotidine 5'-phosphate + diphosphate = orotate + 5-phospho-alpha-D-ribose 1-diphosphate. Its pathway is pyrimidine metabolism; UMP biosynthesis via de novo pathway; UMP from orotate: step 1/2. Catalyzes the transfer of a ribosyl phosphate group from 5-phosphoribose 1-diphosphate to orotate, leading to the formation of orotidine monophosphate (OMP). The sequence is that of Orotate phosphoribosyltransferase from Mycobacterium bovis (strain ATCC BAA-935 / AF2122/97).